The primary structure comprises 104 residues: Complex III assembly factor LYRM7 (104 aa).

At serine 60 the chain carries Phosphoserine.

The protein belongs to the complex I LYR family. In terms of assembly, interacts with UQCRFS1.

It localises to the mitochondrion matrix. Its function is as follows. Assembly factor required for Rieske Fe-S protein UQCRFS1 incorporation into the cytochrome b-c1 (CIII) complex. Functions as a chaperone, binding to this subunit within the mitochondrial matrix and stabilizing it prior to its translocation and insertion into the late CIII dimeric intermediate within the mitochondrial inner membrane. This Pongo abelii (Sumatran orangutan) protein is Complex III assembly factor LYRM7 (LYRM7).